Reading from the N-terminus, the 764-residue chain is Subtilisin-like protease SBT3.1 (764 aa).

Residues 1–32 (MIQTLKTDSSFRLCFAAIAFGFVFIMNGKLSS) form the signal peptide. A propeptide spans 33–120 (GTTPHEFPVY…LLENRKLGLQ (88 aa)) (activation peptide). The 76-residue stretch at 41 to 116 (VYIFYLGERK…EVIILLENRK (76 aa)) folds into the Inhibitor I9 domain. Asn-76 is a glycosylation site (N-linked (GlcNAc...) asparagine). The region spanning 124 to 610 (TWDYLGQFST…GGLVNLEKAT (487 aa)) is the Peptidase S8 domain. Asp-156 acts as the Charge relay system in catalysis. Asn-216 carries N-linked (GlcNAc...) asparagine glycosylation. The Charge relay system role is filled by His-230. 2 N-linked (GlcNAc...) asparagine glycosylation sites follow: Asn-245 and Asn-374. The Charge relay system role is filled by Ser-541. N-linked (GlcNAc...) asparagine glycosylation is found at Asn-674, Asn-711, and Asn-747.

It belongs to the peptidase S8 family.

The protein resides in the secreted. In Arabidopsis thaliana (Mouse-ear cress), this protein is Subtilisin-like protease SBT3.1.